Reading from the N-terminus, the 582-residue chain is Zinc finger protein 319 (582 aa).

The segment covering 1–14 (MSESWQQPPQTQPQ) has biased composition (low complexity). The tract at residues 1-39 (MSESWQQPPQTQPQQPQPPQPQHHAEPPPALAEHTLPPG) is disordered. The C2H2-type 1 zinc finger occupies 76-100 (PKCGVCGHDLAHLSSPHEHQCLAGH). The segment at 104 to 126 (FQCTQCLKIFHQATDLLEHQCVQ) adopts a C2H2-type 2; degenerate zinc-finger fold. K130 is covalently cross-linked (Glycyl lysine isopeptide (Lys-Gly) (interchain with G-Cter in SUMO2)). The C2H2-type 3 zinc-finger motif lies at 132 to 154 (FVCGVCKMGFSLLTSLAQHHSSH). Residues 174 to 196 (EPATTAAPSLPAAPAPSTVTPAE) show a composition bias toward low complexity. The disordered stretch occupies residues 174–198 (EPATTAAPSLPAAPAPSTVTPAEQA). 3 consecutive C2H2-type zinc fingers follow at residues 202 to 224 (YSCPICQKPFKHLSELSRHERIH), 230 to 252 (YKCTLCDKSFSQSSHLVHHKRTH), and 258 to 280 (YKCAVCEKTFKHRSHLVRHMYAH). S281 is subject to Phosphoserine. The C2H2-type 7; degenerate zinc finger occupies 287 to 309 (FRCNVCELHFKESSELLQHPCTP). 3 C2H2-type zinc fingers span residues 315-337 (FRCGECQKAFKRPSDLRQHERTH), 343-365 (FKCDLCPMGFKQQYALMRHRRTH), and 371-393 (FKCGLCEKGFGQPSHLLYHQHVH). The C2H2-type 11; degenerate zinc finger occupies 399-421 (FKCPVCQKGFDQSAELLRHKCLP). A C2H2-type 12 zinc finger spans residues 428–450 (FKCPVCNKAYKRASALQKHQLAH). The segment at 458–480 (LRCTLCERRFFSSSEFVQHRCDP) adopts a C2H2-type 13; degenerate zinc-finger fold. C2H2-type zinc fingers lie at residues 486–508 (LKCPDCEKRFKYASDLQRHRRVH), 514–536 (YKCPNCDKAFKQREHLNKHQGVH), and 542–564 (FKCVWCGERFLDVALLQEHSAQH).

It belongs to the krueppel C2H2-type zinc-finger protein family.

The protein localises to the nucleus. May be involved in transcriptional regulation. In Homo sapiens (Human), this protein is Zinc finger protein 319 (ZNF319).